The following is a 442-amino-acid chain: Zuotin (442 aa).

The disordered stretch occupies residues 49-84; it reads RQRHGRTFSEDERLEVKNKVQEEVKEESEDEEEDPA. The residue at position 55 (T55) is a Phosphothreonine. The segment covering 55–71 has biased composition (basic and acidic residues); it reads TFSEDERLEVKNKVQEE. 2 positions are modified to phosphoserine: S57 and S76. Residues 72 to 83 show a composition bias toward acidic residues; sequence VKEESEDEEEDP. One can recognise a J domain in the interval 97–167; the sequence is DHYAVLGLSK…VRRRQFDSVD (71 aa). 2 disordered regions span residues 242–270 and 306–331; these read DGES…DNAR and GARE…EAAA. Over residues 316 to 330 the composition is skewed to basic and acidic residues; it reads KKKEEEERRAAEEAA.

As to quaternary structure, RAC is a heterodimer of the Hsp70/DnaK-type chaperone ssz1 and the Hsp40/DnaJ-type chaperone zuo1. RAC associates with ribosomes via zuo1.

The protein resides in the cytoplasm. In terms of biological role, component of the ribosome-associated complex (RAC), a heterodimeric chaperone complex involved in regulation of accurate translation termination and in folding or maintaining nascent polypeptides in a folding-competent state. RAC stimulates the ATPase activity of the ribosome-associated pool of Hsp70-type chaperones SSB1/SSB2 that bind to the nascent polypeptide chain. In Schizosaccharomyces pombe (strain 972 / ATCC 24843) (Fission yeast), this protein is Zuotin (zuo1).